The primary structure comprises 166 residues: Interferon gamma (166 aa).

An N-terminal signal peptide occupies residues 1–23 (MNYTTICLAFQLCVIFCSSGYYC). Gln-24 is modified (pyrrolidone carboxylic acid). N-linked (GlcNAc...) asparagine glycosylation is found at Asn-39, Asn-106, and Asn-107.

The protein belongs to the type II (or gamma) interferon family. In terms of assembly, homodimer. Interacts with IFNGR1 (via extracellular domain); this interaction promotes IFNGR1 dimerization.

It localises to the secreted. In terms of biological role, type II interferon produced by immune cells such as T-cells and NK cells that plays crucial roles in antimicrobial, antiviral, and antitumor responses by activating effector immune cells and enhancing antigen presentation. Primarily signals through the JAK-STAT pathway after interaction with its receptor IFNGR1 to affect gene regulation. Upon IFNG binding, IFNGR1 intracellular domain opens out to allow association of downstream signaling components JAK2, JAK1 and STAT1, leading to STAT1 activation, nuclear translocation and transcription of IFNG-regulated genes. Many of the induced genes are transcription factors such as IRF1 that are able to further drive regulation of a next wave of transcription. Plays a role in class I antigen presentation pathway by inducing a replacement of catalytic proteasome subunits with immunoproteasome subunits. In turn, increases the quantity, quality, and repertoire of peptides for class I MHC loading. Increases the efficiency of peptide generation also by inducing the expression of activator PA28 that associates with the proteasome and alters its proteolytic cleavage preference. Up-regulates as well MHC II complexes on the cell surface by promoting expression of several key molecules such as cathepsins B/CTSB, H/CTSH, and L/CTSL. Participates in the regulation of hematopoietic stem cells during development and under homeostatic conditions by affecting their development, quiescence, and differentiation. The polypeptide is Interferon gamma (IFNG) (Mustela putorius furo (European domestic ferret)).